A 375-amino-acid polypeptide reads, in one-letter code: Pulmonary surfactant-associated protein D (375 aa).

The signal sequence occupies residues 1–21 (MLLFLLSALVLLTQSLGYLEA). Residues C35 and C40 each carry the S-nitrosocysteine modification. The interval 43-221 (VESGLPGRDG…DKGAKGESGL (179 aa)) is disordered. The 177-residue stretch at 46–222 (GLPGRDGRDG…KGAKGESGLP (177 aa)) folds into the Collagen-like domain. The segment covering 50–65 (RDGRDGREGPRGEKGD) has biased composition (basic and acidic residues). A 4-hydroxyproline modification is found at P78. At K87 the chain carries 5-hydroxylysine. Residue N90 is glycosylated (N-linked (GlcNAc...) asparagine). Position 96 is a 4-hydroxyproline (P96). Residue K99 is modified to 5-hydroxylysine. Positions 105-114 (SGPPGPPGVP) are enriched in pro residues. Composition is skewed to low complexity over residues 116 to 132 (PAGR…IGPQ) and 138 to 150 (KGEA…VGAP). Residues P171 and P177 each carry the 4-hydroxyproline modification. Over residues 173 to 189 (ERGAPGNAGAAGSAGVM) the composition is skewed to low complexity. The segment covering 204–216 (KGDKGVPGDKGAK) has biased composition (basic and acidic residues). Positions 223–251 (DVASLRQQVEALQKQVQHLQAAFSQYKKV) form a coiled coil. The C-type lectin domain maps to 260-374 (VGEKIFKTAG…CGEKRLVVCE (115 aa)). Disulfide bonds link C281/C373 and C351/C365.

This sequence belongs to the SFTPD family. In terms of assembly, oligomeric complex of 4 set of homotrimers. Post-translationally, hydroxylation on proline residues within the sequence motif, GXPG, is most likely to be 4-hydroxy as this fits the requirement for 4-hydroxylation in vertebrates. S-nitrosylation at Cys-35 and Cys-40 alters the quaternary structure which results in a pro-inflammatory chemoattractive signaling activity with macrophages.

It is found in the secreted. It localises to the extracellular space. The protein resides in the extracellular matrix. Its subcellular location is the surface film. Its function is as follows. Contributes to the lung's defense against inhaled microorganisms, organic antigens and toxins. Interacts with compounds such as bacterial lipopolysaccharides, oligosaccharides and fatty acids and modulates leukocyte action in immune response. May participate in the extracellular reorganization or turnover of pulmonary surfactant. Binds strongly maltose residues and to a lesser extent other alpha-glucosyl moieties. This is Pulmonary surfactant-associated protein D (SFTPD) from Macaca mulatta (Rhesus macaque).